The primary structure comprises 734 residues: Photosystem I P700 chlorophyll a apoprotein A2 (734 aa).

8 helical membrane-spanning segments follow: residues 46 to 69, 135 to 158, 175 to 199, 273 to 291, 330 to 353, 369 to 395, 417 to 439, and 517 to 535; these read IFASHFGQLAIIFLWTSGNLFHVA, LYTGALFLLFLSAISLIAGWLHLQ, LNHHLSGLFGVSSLAWTGHLVHVAI, IAHHHLAIAFLFLVAGHMY, IHFQLGLALASLGVITSLVAQHMY, AALYTHHQYIAGFIMTGAFAHGAIFFI, AIKSHLSWVSLFLGFHTLGLYVH, and FLVHHAIALGLHTTTLILV. Positions 559 and 568 each coordinate [4Fe-4S] cluster. The next 2 membrane-spanning stretches (helical) occupy residues 575-596 and 643-665; these read AFYLAVFWMLNTIGWVTFYWHW and LSVWAWMFLFGHLVWATGFMFLI. The chlorophyll a site is built by His654, Met662, and Tyr670. Trp671 is a binding site for phylloquinone. The helical transmembrane segment at 707 to 727 threads the bilayer; sequence LVGLAHFSVGYIFTYAAFLIA.

It belongs to the PsaA/PsaB family. As to quaternary structure, the PsaA/B heterodimer binds the P700 chlorophyll special pair and subsequent electron acceptors. PSI consists of a core antenna complex that captures photons, and an electron transfer chain that converts photonic excitation into a charge separation. The eukaryotic PSI reaction center is composed of at least 11 subunits. P700 is a chlorophyll a/chlorophyll a' dimer, A0 is one or more chlorophyll a, A1 is one or both phylloquinones and FX is a shared 4Fe-4S iron-sulfur center. serves as cofactor.

It is found in the plastid. The protein resides in the chloroplast thylakoid membrane. It carries out the reaction reduced [plastocyanin] + hnu + oxidized [2Fe-2S]-[ferredoxin] = oxidized [plastocyanin] + reduced [2Fe-2S]-[ferredoxin]. PsaA and PsaB bind P700, the primary electron donor of photosystem I (PSI), as well as the electron acceptors A0, A1 and FX. PSI is a plastocyanin-ferredoxin oxidoreductase, converting photonic excitation into a charge separation, which transfers an electron from the donor P700 chlorophyll pair to the spectroscopically characterized acceptors A0, A1, FX, FA and FB in turn. Oxidized P700 is reduced on the lumenal side of the thylakoid membrane by plastocyanin. The sequence is that of Photosystem I P700 chlorophyll a apoprotein A2 from Drimys granadensis.